A 180-amino-acid chain; its full sequence is MIIYLHGFDSNSPGNHEKVLQLQFIDPDVRLVSYSTRHPKHDMQHLLKEVDKMLQLNVDERPLICGVGLGGYWAERIGFLCDIRQVVFNPNLFPYENMEGKIDRPEEYADIATKCVTNFREKNRDRCLVILSRHDEALDSQRSAQALHPFYEIVWDEEQTHKFKNISPYLQRIKAFKTLG.

Belongs to the UPF0227 family.

The protein is UPF0227 protein YcfP of Salmonella paratyphi A (strain ATCC 9150 / SARB42).